Reading from the N-terminus, the 864-residue chain is DNA mismatch repair protein MutS (864 aa).

613–620 (GPNMGGKS) provides a ligand contact to ATP.

It belongs to the DNA mismatch repair MutS family.

This protein is involved in the repair of mismatches in DNA. It is possible that it carries out the mismatch recognition step. This protein has a weak ATPase activity. The sequence is that of DNA mismatch repair protein MutS from Actinobacillus pleuropneumoniae serotype 7 (strain AP76).